A 197-amino-acid polypeptide reads, in one-letter code: Sodium/potassium-transporting ATPase subunit beta-1-interacting protein 3 (197 aa).

4 helical membrane passes run 2–22, 35–55, 62–82, and 152–172; these read GCCTGRCSLICLCALQLVSAL, APILGNFLHIIVVILGLFGTI, IMVYTVWTALWVTWNVFIICF, and VQILLSLVGFVYACYVISISM.

This sequence belongs to the NKAIN family. As to quaternary structure, interacts with ATP1B1.

Its subcellular location is the cell membrane. The protein is Sodium/potassium-transporting ATPase subunit beta-1-interacting protein 3 (NKAIN3) of Homo sapiens (Human).